The sequence spans 138 residues: MSRIVAIDYGRKRTGIAVSDTLQLIANGLTTVPTHELLNFIGGYVAKEPVERIIIGLPKQMNNEASENMKNIEPFVRSLKKRFPELPVEYVDERFTSVLAHRTMLEAGLKKKDRQNKALVDEISATIILQTYLESKRF.

Belongs to the YqgF nuclease family.

It localises to the cytoplasm. Functionally, could be a nuclease involved in processing of the 5'-end of pre-16S rRNA. This is Putative pre-16S rRNA nuclease from Bacteroides thetaiotaomicron (strain ATCC 29148 / DSM 2079 / JCM 5827 / CCUG 10774 / NCTC 10582 / VPI-5482 / E50).